Reading from the N-terminus, the 374-residue chain is bZIP transcription factor TRAB1 (374 aa).

Positions Met-1 to Gly-13 are enriched in basic and acidic residues. Disordered regions lie at residues Met-1–Ala-23 and Ala-117–Leu-142. The span at Ala-14–Ala-23 shows a compositional bias: low complexity. Residues Val-286–Asn-349 enclose the bZIP domain. The segment at Arg-288–Lys-307 is basic motif. Residues Leu-314 to Ile-335 are leucine-zipper.

It belongs to the bZIP family. Interacts with VP1 (via N-terminus). Expressed in roots, leaves and embryos.

Its subcellular location is the nucleus. In terms of biological role, transcription activator that mediates abscisic acid (ABA) signaling. Binds specifically to the ABA-responsive element (ABRE) of the EMP1 and RAB16A gene promoters. The sequence is that of bZIP transcription factor TRAB1 from Oryza sativa subsp. japonica (Rice).